The following is a 605-amino-acid chain: MARISAHVIDAIADRVDLVSLVGNYTHLERRGDDWWGRCPFHHERTPSFHVVPDKKMYYCFGCGVGGSTIKFFMEIEKIDFHEAAVRLAKRAGIEMSFEDGVHAPSAHASFTMQLCEVYQRIAETFHHVLMHTAQGARARAYLASRKVTDDSIRTFKLGYAPPDPVWLFQFLRHKGYSPEFLARSGLFAKKSERIAVFSDRIMYPIADRYGQVIAFGARALGTAPAKYLNTADMPQYKKGEHLFAFHCALSQMRKTRAAIICEGYMDVIAFHQAQLTYAVAPLGALLTKSQARLMRSFVDRIYMCFDADGAGRAATYKAILLCRSLGFEVRIVELNGGTDPAECACIEGEDALRKSVERSTTDAQYLIRCARHEHSHLGADDTSRAVSFLFPYLSVLDSAIQREQVMQDIAMAFGIRIQAVHADYLRYVSRTTQKGTTGNCVLSVQGTAIQVKEPATGVRTAQLRLVLAVVANPELFELLRESVCADDFEDPMAKELFIILEECYRADTRASPHVLSCCTTDELRKLVSEAIVCGEFSCNAPQIVRDGVALVRRNRLLKERESLVGRLRRFGDASSGEECGSMQELMMEKQRVDEELERLKGVRK.

The CHC2-type zinc finger occupies 39–63 (CPFHHERTPSFHVVPDKKMYYCFGC). Positions 257-338 (RAAIICEGYM…EVRIVELNGG (82 aa)) constitute a Toprim domain. Residues Glu263, Asp307, and Asp309 each contribute to the Mg(2+) site.

The protein belongs to the DnaG primase family. As to quaternary structure, monomer. Interacts with DnaB. The cofactor is Zn(2+). It depends on Mg(2+) as a cofactor.

It carries out the reaction ssDNA + n NTP = ssDNA/pppN(pN)n-1 hybrid + (n-1) diphosphate.. Functionally, RNA polymerase that catalyzes the synthesis of short RNA molecules used as primers for DNA polymerase during DNA replication. This chain is DNA primase, found in Treponema pallidum (strain Nichols).